The sequence spans 560 residues: Dihydroxy-acid dehydratase (560 aa).

Residue Asp-80 participates in Mg(2+) binding. Residue Cys-121 participates in [2Fe-2S] cluster binding. Residues Asp-122 and Lys-123 each contribute to the Mg(2+) site. Lys-123 is subject to N6-carboxylysine. [2Fe-2S] cluster is bound at residue Cys-194. A Mg(2+)-binding site is contributed by Glu-447. Ser-473 functions as the Proton acceptor in the catalytic mechanism.

Belongs to the IlvD/Edd family. In terms of assembly, homodimer. Requires [2Fe-2S] cluster as cofactor. The cofactor is Mg(2+).

The catalysed reaction is (2R)-2,3-dihydroxy-3-methylbutanoate = 3-methyl-2-oxobutanoate + H2O. The enzyme catalyses (2R,3R)-2,3-dihydroxy-3-methylpentanoate = (S)-3-methyl-2-oxopentanoate + H2O. It functions in the pathway amino-acid biosynthesis; L-isoleucine biosynthesis; L-isoleucine from 2-oxobutanoate: step 3/4. The protein operates within amino-acid biosynthesis; L-valine biosynthesis; L-valine from pyruvate: step 3/4. Functionally, functions in the biosynthesis of branched-chain amino acids. Catalyzes the dehydration of (2R,3R)-2,3-dihydroxy-3-methylpentanoate (2,3-dihydroxy-3-methylvalerate) into 2-oxo-3-methylpentanoate (2-oxo-3-methylvalerate) and of (2R)-2,3-dihydroxy-3-methylbutanoate (2,3-dihydroxyisovalerate) into 2-oxo-3-methylbutanoate (2-oxoisovalerate), the penultimate precursor to L-isoleucine and L-valine, respectively. The protein is Dihydroxy-acid dehydratase of Chlorobaculum parvum (strain DSM 263 / NCIMB 8327) (Chlorobium vibrioforme subsp. thiosulfatophilum).